The sequence spans 154 residues: uncharacterized protein (154 aa).

The protein localises to the mitochondrion. This is an uncharacterized protein from Arabidopsis thaliana (Mouse-ear cress).